Here is a 111-residue protein sequence, read N- to C-terminus: Nucleoid-associated protein PFL_1905 (111 aa).

2 disordered regions span residues 1–20 (MKGG…EKMA) and 88–111 (SNSQ…KLPF).

Belongs to the YbaB/EbfC family. In terms of assembly, homodimer.

Its subcellular location is the cytoplasm. It is found in the nucleoid. In terms of biological role, binds to DNA and alters its conformation. May be involved in regulation of gene expression, nucleoid organization and DNA protection. This is Nucleoid-associated protein PFL_1905 from Pseudomonas fluorescens (strain ATCC BAA-477 / NRRL B-23932 / Pf-5).